A 260-amino-acid polypeptide reads, in one-letter code: Universal stress protein PHOS34 (260 aa).

Residues methionine 1–serine 33 constitute a chloroplast transit peptide. A disordered region spans residues methionine 1–glycine 42. Positions lysine 14–serine 28 are enriched in basic residues. Residue proline 18 coordinates ATP. Serine 20 is subject to Phosphoserine; by MAPK3 and MAPK6. The span at serine 29–alanine 41 shows a compositional bias: low complexity. Valine 80 is a binding site for ATP. A disordered region spans residues glycine 92 to aspartate 118. Residues glycine 170 to arginine 179 and serine 187 to serine 189 each bind ATP. The interval arginine 209 to glutamate 260 is disordered. At serine 230 the chain carries Phosphoserine. A compositionally biased stretch (basic and acidic residues) spans serine 251–glutamate 260.

It belongs to the universal stress protein A family. Phosphorylated by MAPK3 and MAPK6 after pathogenic elicitation (e.g. bacterial flg22, Phytophthora infestans zoospores and xylanase).

It localises to the plastid. The protein resides in the chloroplast. This is Universal stress protein PHOS34 from Arabidopsis thaliana (Mouse-ear cress).